The primary structure comprises 325 residues: Olfactory receptor 5H6 (325 aa).

Residues 1 to 41 are Extracellular-facing; that stretch reads MFLYLCFIFQRTCSEEMEEENATLLTEFVLTGFLHQPDCKI. N-linked (GlcNAc...) asparagine glycosylation occurs at Asn-21. Residues 42-62 form a helical membrane-spanning segment; it reads PLFLAFLVIYLITIMGNLGLI. Residues 63 to 70 lie on the Cytoplasmic side of the membrane; it reads VLIWKDPH. Residues 71–91 traverse the membrane as a helical segment; sequence LHIPMYLFLGSLAFVDASLSS. Topologically, residues 92–115 are extracellular; sequence TVTPKMLINFLAKSKMISLSECMV. An intrachain disulfide couples Cys-113 to Cys-205. A helical transmembrane segment spans residues 116–136; it reads QFFSLVTTVTTECFLLATMAY. Residues 137–155 are Cytoplasmic-facing; that stretch reads DRYVAICKALLYPVIMTNE. Residues 156–176 traverse the membrane as a helical segment; the sequence is LCIQLLVLSFIGGLLHALIHE. The Extracellular segment spans residues 177-212; that stretch reads AFSFRLTFCNSNIIQHFYCDIIPLLKISCTDSSINF. A helical transmembrane segment spans residues 213 to 233; sequence LMVFIFAGSVQVFTIGTILIS. Topologically, residues 234–253 are cytoplasmic; it reads YTIILFTILEKKSIKGIRKA. The chain crosses the membrane as a helical span at residues 254–274; sequence VSTCGAHLLSVSLYYGPLTFK. Topologically, residues 275-287 are extracellular; the sequence is YLGSASPQADDQD. The chain crosses the membrane as a helical span at residues 288–308; that stretch reads MMESLFYTVIVPLLNPMIYSL. Residues 309–325 are Cytoplasmic-facing; that stretch reads RNKQVIASFTKMFKSNV.

The protein belongs to the G-protein coupled receptor 1 family.

Its subcellular location is the cell membrane. Odorant receptor. The chain is Olfactory receptor 5H6 (OR5H6) from Homo sapiens (Human).